Consider the following 196-residue polypeptide: 3-isopropylmalate dehydratase small subunit (196 aa).

The protein belongs to the LeuD family. LeuD type 1 subfamily. As to quaternary structure, heterodimer of LeuC and LeuD.

It carries out the reaction (2R,3S)-3-isopropylmalate = (2S)-2-isopropylmalate. It functions in the pathway amino-acid biosynthesis; L-leucine biosynthesis; L-leucine from 3-methyl-2-oxobutanoate: step 2/4. In terms of biological role, catalyzes the isomerization between 2-isopropylmalate and 3-isopropylmalate, via the formation of 2-isopropylmaleate. This is 3-isopropylmalate dehydratase small subunit from Corynebacterium aurimucosum (strain ATCC 700975 / DSM 44827 / CIP 107346 / CN-1) (Corynebacterium nigricans).